The primary structure comprises 145 residues: D-aminoacyl-tRNA deacylase (145 aa).

Residues 137–138 carry the Gly-cisPro motif, important for rejection of L-amino acids motif; the sequence is GP.

Belongs to the DTD family. In terms of assembly, homodimer.

It localises to the cytoplasm. The enzyme catalyses glycyl-tRNA(Ala) + H2O = tRNA(Ala) + glycine + H(+). It catalyses the reaction a D-aminoacyl-tRNA + H2O = a tRNA + a D-alpha-amino acid + H(+). Functionally, an aminoacyl-tRNA editing enzyme that deacylates mischarged D-aminoacyl-tRNAs. Also deacylates mischarged glycyl-tRNA(Ala), protecting cells against glycine mischarging by AlaRS. Acts via tRNA-based rather than protein-based catalysis; rejects L-amino acids rather than detecting D-amino acids in the active site. By recycling D-aminoacyl-tRNA to D-amino acids and free tRNA molecules, this enzyme counteracts the toxicity associated with the formation of D-aminoacyl-tRNA entities in vivo and helps enforce protein L-homochirality. The sequence is that of D-aminoacyl-tRNA deacylase from Cereibacter sphaeroides (strain KD131 / KCTC 12085) (Rhodobacter sphaeroides).